A 721-amino-acid chain; its full sequence is MPRAARKQTLPMREMADLDAVHLGLDENEADIAEELQDFEFNTRSEASESNGGDSSDSEPSISSVSTATSSLAGSSKRKTKKPAKQSPQPAVETKSSKSSAKNKAKREPTPEELNGGKKKKRTDSGTKKTTSSEASDKVKSKSPDTEDRQPSAKKSRTKIPSNANDSAGHKSDLSEAEDEKPSLPTLESDSESSDSDSGTQHKRNGGNGGGNGRGKPSSKSSTPEKDSVGGGTHSHSQKGYDYMTKLNYLFRDTRFFLIKSNNSDNVQLSKNKSVWATLPQNDANLNQAFKEARNVLLIFSVNESGKFAGFARMAAPSRRDIPQVAWVLPPSISPKALGGVIELDWICRKELSFNATLHLHNTWNEGKPVKIGRDGQEIEPKIGGELCRLFPEDEQIELTPILKKSKETARVMREKGIHVIYKPPRSLSSRGHGGGGRGGGRGSNHDHLGPMRHKRSYHGAPHHRPYRHHHGMGLPPGGGFKRSGSPYRQMGGAAGAPPGGPGDMAMPSWERYMSSAAAAEAYVADYMRNMHGQLPPLPFVPPFAQLPIPGAGAGAAGALPPGAAAAMYEQLPPPVRYYDGPGAPPLPDYPPPQRPPPPGFDKAPSYEEFAAWKNAGLPTVPPPGFPVYGGAANGGSNGAGGLAAAQAAAAGGGMGAGGGSGGGMGGPGGYRNRDGNNGSAGGRRREYGNRSGGGGSSRDSRPFRERGGGGGQRSYRDNRR.

The span at 29 to 38 (EADIAEELQD) shows a compositional bias: acidic residues. Positions 29–239 (EADIAEELQD…GGGTHSHSQK (211 aa)) are disordered. Residues 48–75 (SESNGGDSSDSEPSISSVSTATSSLAGS) are compositionally biased toward low complexity. Positions 135–151 (ASDKVKSKSPDTEDRQP) are enriched in basic and acidic residues. The YTH domain occupies 254–391 (TRFFLIKSNN…KIGGELCRLF (138 aa)). RNA contacts are provided by residues 260–262 (KSN), Trp-276, and Trp-327. 3 disordered regions span residues 424–471 (PPRS…RHHH), 580–605 (DGPG…DKAP), and 651–721 (AGGG…DNRR). Gly residues predominate over residues 432-443 (GHGGGGRGGGRG). Basic residues predominate over residues 451 to 471 (PMRHKRSYHGAPHHRPYRHHH). Over residues 583–600 (GAPPLPDYPPPQRPPPPG) the composition is skewed to pro residues. The span at 651-670 (AGGGMGAGGGSGGGMGGPGG) shows a compositional bias: gly residues. Residues 699–708 (RDSRPFRERG) show a composition bias toward basic and acidic residues.

The protein resides in the nucleus. In terms of biological role, regulator of alternative splicing that specifically recognizes and binds N6-methyladenosine (m6A)-containing RNAs. Acts by acting as a reader of m6A methylation. Required for sex determination and dosage compensation via Sxl alternative splicing: m6A methylation acts as a key regulator of Sxl pre-mRNA and promotes female-specific alternative splicing of Sxl, which determines female physiognomy. M6A methylation is also required for neuronal functions. The sequence is that of YTH domain-containing protein 1 from Drosophila melanogaster (Fruit fly).